Reading from the N-terminus, the 123-residue chain is Small ribosomal subunit protein uS12c (123 aa).

The protein belongs to the universal ribosomal protein uS12 family. In terms of assembly, part of the 30S ribosomal subunit.

The protein localises to the plastid. Its subcellular location is the chloroplast. Functionally, with S4 and S5 plays an important role in translational accuracy. Located at the interface of the 30S and 50S subunits. The protein is Small ribosomal subunit protein uS12c (rps12) of Pinus thunbergii (Japanese black pine).